The following is a 308-amino-acid chain: Ribosomal RNA large subunit methyltransferase F (308 aa).

Belongs to the methyltransferase superfamily. METTL16/RlmF family.

It is found in the cytoplasm. It carries out the reaction adenosine(1618) in 23S rRNA + S-adenosyl-L-methionine = N(6)-methyladenosine(1618) in 23S rRNA + S-adenosyl-L-homocysteine + H(+). Functionally, specifically methylates the adenine in position 1618 of 23S rRNA. In Salmonella paratyphi A (strain ATCC 9150 / SARB42), this protein is Ribosomal RNA large subunit methyltransferase F.